Reading from the N-terminus, the 466-residue chain is Delta-1 crystallin (466 aa).

Belongs to the lyase 1 family. Argininosuccinate lyase subfamily. As to quaternary structure, homotetramer. Eye lens.

In terms of biological role, delta crystallin, the principal crystallin in embryonic lens, is found only in birds and reptiles. This chain is Delta-1 crystallin (ASL1), found in Meleagris gallopavo (Wild turkey).